A 126-amino-acid polypeptide reads, in one-letter code: Protein LiaI (126 aa).

The next 2 membrane-spanning stretches (helical) occupy residues 11–31 (FLLI…GFII) and 56–76 (IIVG…VVGI).

The protein localises to the cell membrane. This Bacillus subtilis (strain 168) protein is Protein LiaI (liaI).